The chain runs to 161 residues: S-ribosylhomocysteine lyase (161 aa).

Positions 57, 61, and 124 each coordinate Fe cation.

The protein belongs to the LuxS family. As to quaternary structure, homodimer. Fe cation serves as cofactor.

It catalyses the reaction S-(5-deoxy-D-ribos-5-yl)-L-homocysteine = (S)-4,5-dihydroxypentane-2,3-dione + L-homocysteine. Involved in the synthesis of autoinducer 2 (AI-2) which is secreted by bacteria and is used to communicate both the cell density and the metabolic potential of the environment. The regulation of gene expression in response to changes in cell density is called quorum sensing. Catalyzes the transformation of S-ribosylhomocysteine (RHC) to homocysteine (HC) and 4,5-dihydroxy-2,3-pentadione (DPD). In Macrococcus caseolyticus (strain JCSC5402) (Macrococcoides caseolyticum), this protein is S-ribosylhomocysteine lyase.